Consider the following 90-residue polypeptide: Aminoacyl carrier protein 1 (90 aa).

Positions 6-84 (TDVRNRIIKL…TLERMVMTQL (79 aa)) constitute a Carrier domain. Ser-42 bears the O-(pantetheine 4'-phosphoryl)serine mark.

4'-phosphopantetheine is transferred from CoA to a specific serine of the apo-form of this carrier protein.

Its function is as follows. Aminoacyl carrier protein. Can be charged with L-glycine via the formation of a thioester bond between the amino acid and the 4'-phosphopantetheinyl prosthetic group, catalyzed by the bll0957 ligase. The protein is Aminoacyl carrier protein 1 of Bradyrhizobium diazoefficiens (strain JCM 10833 / BCRC 13528 / IAM 13628 / NBRC 14792 / USDA 110).